Consider the following 171-residue polypeptide: Large ribosomal subunit protein uL10 (171 aa).

It belongs to the universal ribosomal protein uL10 family. Part of the ribosomal stalk of the 50S ribosomal subunit. The N-terminus interacts with L11 and the large rRNA to form the base of the stalk. The C-terminus forms an elongated spine to which L12 dimers bind in a sequential fashion forming a multimeric L10(L12)X complex.

Functionally, forms part of the ribosomal stalk, playing a central role in the interaction of the ribosome with GTP-bound translation factors. The chain is Large ribosomal subunit protein uL10 from Nitrosomonas eutropha (strain DSM 101675 / C91 / Nm57).